Consider the following 138-residue polypeptide: Large ribosomal subunit protein uL16 (138 aa).

A compositionally biased stretch (basic residues) spans 1 to 13; it reads MLQPKRRKYRKEQ. The segment at 1-22 is disordered; that stretch reads MLQPKRRKYRKEQKGRNTGVAT.

Belongs to the universal ribosomal protein uL16 family. In terms of assembly, part of the 50S ribosomal subunit.

Binds 23S rRNA and is also seen to make contacts with the A and possibly P site tRNAs. This chain is Large ribosomal subunit protein uL16, found in Paraburkholderia phymatum (strain DSM 17167 / CIP 108236 / LMG 21445 / STM815) (Burkholderia phymatum).